The sequence spans 182 residues: pEARLI1-like lipid transfer protein 2 (182 aa).

The first 25 residues, 1–25, serve as a signal peptide directing secretion; sequence MASKNSASLALFFALNILFFTLTAG. Residues 33-92 show a composition bias toward pro residues; that stretch reads SPKPRPLPNPKVPSPKVPTPSVPSPYVPTPSVPSPSVPTPSVPSPSVPSPNPTPVIPPRT. The segment at 33 to 94 is disordered; the sequence is SPKPRPLPNP…TPVIPPRTPG (62 aa). 7 consecutive repeat copies span residues 42–46, 47–51, 52–56, 62–66, 67–71, 72–76, and 77–81. Residues 42–81 form a 7 X 5 AA repeats of P-[KS]-V-P-[ST] region; the sequence is PKVPSPKVPTPSVPSPYVPTPSVPSPSVPTPSVPSPSVPS.

It belongs to the plant LTP family. PEARLI1 subfamily.

The protein localises to the secreted. It is found in the cell wall. Its function is as follows. Probable lipid transfer protein (LTP). May improve freezing survival. Seems to control the flowering process and lignin synthesis. Confers resistance to Botrytis cinerea. This chain is pEARLI1-like lipid transfer protein 2, found in Arabidopsis thaliana (Mouse-ear cress).